The primary structure comprises 392 residues: Glutamate 5-kinase (392 aa).

Lysine 17 contacts ATP. Substrate is bound by residues serine 57, aspartate 144, and asparagine 156. ATP is bound at residue 176–177 (SD). Residues 282 to 359 (AGILSVDAGA…AEIEALLGYA (78 aa)) enclose the PUA domain. Positions 373–392 (TEQTGRKAGKSTKKKDEAHA) are disordered.

This sequence belongs to the glutamate 5-kinase family.

Its subcellular location is the cytoplasm. The catalysed reaction is L-glutamate + ATP = L-glutamyl 5-phosphate + ADP. The protein operates within amino-acid biosynthesis; L-proline biosynthesis; L-glutamate 5-semialdehyde from L-glutamate: step 1/2. Catalyzes the transfer of a phosphate group to glutamate to form L-glutamate 5-phosphate. This is Glutamate 5-kinase from Allorhizobium ampelinum (strain ATCC BAA-846 / DSM 112012 / S4) (Agrobacterium vitis (strain S4)).